Consider the following 553-residue polypeptide: Mucolipin-3 (553 aa).

The Cytoplasmic segment spans residues 1–62 (MANPEIVISS…FWARGRKPWK (62 aa)). Residues 52–62 (KFWARGRKPWK) form an interaction with phosphoinositides region. The chain crosses the membrane as a helical span at residues 63–83 (LAIQILKIAMVTIQLVLFGLS). Residues 84–283 (NQMVVAFKEE…VSGSIQKNTH (200 aa)) lie on the Extracellular side of the membrane. The tract at residues 104 to 118 (KGYIDRMDDTYAVYT) is extracellular/lumenal pore loop. Residue Asn138 is glycosylated (N-linked (GlcNAc...) asparagine). Cysteines 159 and 185 form a disulfide. An N-linked (GlcNAc...) asparagine glycan is attached at Asn205. A disulfide bridge links Cys238 with Cys269. A helical membrane pass occupies residues 284-304 (NMMIFDAFVILTCLVSLILCI). Residues 305–341 (RSVISGLQLQQEFVNFFLLHYKKDVSVSDQMEFVNGW) are Cytoplasmic-facing. The helical transmembrane segment at 342–362 (YIMIIISDILTIIGSILKMEI) threads the bilayer. The Extracellular portion of the chain corresponds to 363 to 371 (QAKSLTSYD). Residues 372–392 (VCSILLGTSTMLVWLGVIRYL) traverse the membrane as a helical segment. Topologically, residues 393-414 (GFFAKYNLLILTLQAALPNVIR) are cytoplasmic. The chain crosses the membrane as a helical span at residues 415–435 (FCCCAAMIYLGYCFCGWIVLG). The Extracellular segment spans residues 436 to 443 (PYHNKFRS). An intramembrane region (pore-forming) is located at residues 444 to 464 (LNMVSECLFSLINGDDMFATF). Positions 456–459 (NGDD) match the Selectivity filter motif. Over 465–475 (AKMQQKSYLVW) the chain is Extracellular. Residues 476–497 (LFSRIYLYSFISLFIYMILSLF) traverse the membrane as a helical segment. At 498-553 (IALITDTYETIKHYQQDGFPETELRTFISECKDLPNSGKFRLEDDPPVSLFCCCKK) the chain is on the cytoplasmic side.

This sequence belongs to the transient receptor (TC 1.A.4) family. Polycystin subfamily. MCOLN3 sub-subfamily. In terms of assembly, homotetramer. Can heterooligomerize with MCOLN1; heteromeric assemblies have different channel properties as compared to the respective homooligomers and may be tissue-specific. May heterooligomerize with TRPV5 to form a functional distinct ion channel. Interacts with GABARAPL2. In terms of processing, N-glycosylated.

The protein localises to the lysosome membrane. The protein resides in the early endosome membrane. It localises to the late endosome membrane. Its subcellular location is the cytoplasmic vesicle. It is found in the autophagosome membrane. The protein localises to the cell projection. The protein resides in the stereocilium membrane. It carries out the reaction Ca(2+)(in) = Ca(2+)(out). The catalysed reaction is Mg(2+)(in) = Mg(2+)(out). It catalyses the reaction K(+)(in) = K(+)(out). The enzyme catalyses Na(+)(in) = Na(+)(out). With respect to regulation, channel activity is activated by PtdIns(3,5)P2 (phosphatidylinositol 3,5-bisphosphate). Inhibited by lumenal H(+) and Na(+). The channel pore shows dynamic behavior and undergoes spontaneous, Ca(2+)-dependent modulation when conducting Ca(2+). Nonselective cation channel probably playing a role in the regulation of membrane trafficking events. Acts as a Ca(2+)-permeable cation channel with inwardly rectifying activity. Mediates release of Ca(2+) from endosomes to the cytoplasm, contributes to endosomal acidification and is involved in the regulation of membrane trafficking and fusion in the endosomal pathway. Also permeable to Mg(2+), Na(+) and K(+). Does not seem to act as mechanosensory transduction channel in inner ear sensory hair cells. Proposed to play a critical role at the cochlear stereocilia ankle-link region during hair-bundle growth. Involved in the regulation of autophagy. Through association with GABARAPL2 may be involved in autophagosome formation possibly providing Ca(2+) for the fusion process. Through a possible and probably tissue-specific heteromerization with MCOLN1 may be at least in part involved in many lysosome-dependent cellular events. Possible heteromeric ion channel assemblies with TRPV5 show pharmacological similarity with TRPML3. The chain is Mucolipin-3 from Callithrix jacchus (White-tufted-ear marmoset).